The following is a 318-amino-acid chain: Nucleotide-binding protein Lcho_3490 (318 aa).

ATP is bound at residue 35–42 (GISGGGKS). 84–87 (DVRN) contributes to the GTP binding site.

This sequence belongs to the RapZ-like family.

Its function is as follows. Displays ATPase and GTPase activities. The chain is Nucleotide-binding protein Lcho_3490 from Leptothrix cholodnii (strain ATCC 51168 / LMG 8142 / SP-6) (Leptothrix discophora (strain SP-6)).